Reading from the N-terminus, the 434-residue chain is 3-phosphoshikimate 1-carboxyvinyltransferase (434 aa).

3-phosphoshikimate is bound by residues Lys-22, Ser-23, and Arg-27. Residue Lys-22 participates in phosphoenolpyruvate binding. Phosphoenolpyruvate is bound by residues Gly-93 and Arg-121. The 3-phosphoshikimate site is built by Ser-168, Ser-169, Gln-170, Ser-199, Asp-320, and Lys-347. Position 170 (Gln-170) interacts with phosphoenolpyruvate. Catalysis depends on Asp-320, which acts as the Proton acceptor. Residues Arg-351, Arg-394, and Lys-419 each contribute to the phosphoenolpyruvate site.

This sequence belongs to the EPSP synthase family. Monomer.

The protein resides in the cytoplasm. It carries out the reaction 3-phosphoshikimate + phosphoenolpyruvate = 5-O-(1-carboxyvinyl)-3-phosphoshikimate + phosphate. It functions in the pathway metabolic intermediate biosynthesis; chorismate biosynthesis; chorismate from D-erythrose 4-phosphate and phosphoenolpyruvate: step 6/7. In terms of biological role, catalyzes the transfer of the enolpyruvyl moiety of phosphoenolpyruvate (PEP) to the 5-hydroxyl of shikimate-3-phosphate (S3P) to produce enolpyruvyl shikimate-3-phosphate and inorganic phosphate. In Burkholderia lata (strain ATCC 17760 / DSM 23089 / LMG 22485 / NCIMB 9086 / R18194 / 383), this protein is 3-phosphoshikimate 1-carboxyvinyltransferase.